The chain runs to 430 residues: Enolase (430 aa).

Gln-168 is a binding site for (2R)-2-phosphoglycerate. Glu-210 serves as the catalytic Proton donor. Residues Asp-247, Glu-288, and Asp-315 each coordinate Mg(2+). (2R)-2-phosphoglycerate contacts are provided by Lys-340, Arg-369, Ser-370, and Lys-391. Lys-340 serves as the catalytic Proton acceptor.

This sequence belongs to the enolase family. The cofactor is Mg(2+).

The protein resides in the cytoplasm. It localises to the secreted. It is found in the cell surface. The enzyme catalyses (2R)-2-phosphoglycerate = phosphoenolpyruvate + H2O. It functions in the pathway carbohydrate degradation; glycolysis; pyruvate from D-glyceraldehyde 3-phosphate: step 4/5. Functionally, catalyzes the reversible conversion of 2-phosphoglycerate (2-PG) into phosphoenolpyruvate (PEP). It is essential for the degradation of carbohydrates via glycolysis. The sequence is that of Enolase from Picosynechococcus sp. (strain ATCC 27264 / PCC 7002 / PR-6) (Agmenellum quadruplicatum).